The primary structure comprises 496 residues: Cytochrome P450 71D180 (496 aa).

The helical; Signal-anchor for type II membrane protein transmembrane segment at 1–21 (MDISISWVVIIVFVLSYLILM) threads the bilayer. Cys435 lines the heme pocket.

The protein belongs to the cytochrome P450 family. Heme serves as cofactor. In terms of tissue distribution, mostly expressed in flowers and, to a lower extent, in leaves, especially in glandular trichomes.

Its subcellular location is the membrane. It carries out the reaction (4R)-limonene + reduced [NADPH--hemoprotein reductase] + O2 = (1R,5S)-carveol + oxidized [NADPH--hemoprotein reductase] + H2O + H(+). It catalyses the reaction (4S)-limonene + reduced [NADPH--hemoprotein reductase] + O2 = (1S,5R)-carveol + oxidized [NADPH--hemoprotein reductase] + H2O + H(+). The enzyme catalyses gamma-terpinene + 2 reduced [NADPH--hemoprotein reductase] + 2 O2 = carvacrol + 2 oxidized [NADPH--hemoprotein reductase] + 3 H2O + 2 H(+). The protein operates within secondary metabolite biosynthesis; terpenoid biosynthesis. In terms of biological role, involved in the biosynthesis of phenolic monoterpenes natural products thymol and carvacrol which have a broad range of biological activities acting as antimicrobial compounds, insecticides, antioxidants and pharmaceutical agents. Catalyzes the C2-hydroxylation of gamma-terpinene to produce carvacrol. Mediates also the C6-hydroxylation of (4S)-limonene and (4R)-limonene to form carveol. The chain is Cytochrome P450 71D180 from Thymus vulgaris (Thyme).